Reading from the N-terminus, the 343-residue chain is tRNA-specific 2-thiouridylase MnmA 2 (343 aa).

ATP is bound by residues 7-14 (GMSGGVDS) and L33. Residue C91 is the Nucleophile of the active site. C91 and C189 are disulfide-bonded. ATP is bound at residue G115. An interaction with tRNA region spans residues 139–141 (KDQ). The active-site Cysteine persulfide intermediate is the C189.

This sequence belongs to the MnmA/TRMU family.

The protein localises to the cytoplasm. It carries out the reaction S-sulfanyl-L-cysteinyl-[protein] + uridine(34) in tRNA + AH2 + ATP = 2-thiouridine(34) in tRNA + L-cysteinyl-[protein] + A + AMP + diphosphate + H(+). Functionally, catalyzes the 2-thiolation of uridine at the wobble position (U34) of tRNA, leading to the formation of s(2)U34. This is tRNA-specific 2-thiouridylase MnmA 2 from Fusobacterium nucleatum subsp. nucleatum (strain ATCC 25586 / DSM 15643 / BCRC 10681 / CIP 101130 / JCM 8532 / KCTC 2640 / LMG 13131 / VPI 4355).